Here is a 266-residue protein sequence, read N- to C-terminus: Integral membrane protein 2B (266 aa).

The Cytoplasmic segment spans residues 1–54 (MVKVTFNSALAQKEAKKXEPKSGEEALIIPPDTXAVDCKDPDEVVPVGQRRAWC). Residues 55-75 (WCMCFGLAFMLAGVILGGAYL) form a helical; Signal-anchor for type II membrane protein membrane-spanning segment. Over 76–266 (YKYFALQPDD…KFAVETLICS (191 aa)) the chain is Lumenal. The segment at 102–134 (EPPANAPAARYQTIEENIKIFEEDGVEFISVPV) is necessary for interaction with APP and inhibitor effects on APP processing. In terms of domain architecture, BRICHOS spans 137 to 231 (FADSDPANIV…LCHDKETYKL (95 aa)). Cystine bridges form between Cys-164-Cys-223 and Cys-248-Cys-265. An N-linked (GlcNAc...) asparagine glycan is attached at Asn-170.

The protein belongs to the ITM2 family. Homodimer; disulfide-linked. Interacts with SPPL2A and SPPL2B. Interacts with APP. Mature BRI2 (mBRI2) interacts with the APP amyloid-beta A4 protein; the interaction occurs at the cell surface and in the endocytic compartments and enable alpha- and beta-secretase-induced APP cleavage inhibition. Mature BRI2 (mBRI2) interacts with the APP C99; the interaction occurs in the endocytic compartments and enable gamma-secretase-induced C99 cleavage inhibition. May form heterodimers with Bri23 peptide and APP amyloid-beta protein 40. Interacts with ADAM7 in sperm; the interaction increases following capacitation. Post-translationally, the ectodomain C-terminal part of the imBRI2 is processed by furin producing a secreted Bri23 peptide and a mature BRI2, membrane form (mBRI2). The remaining part of the ectodomain of mBRI2 containing the BRICHOS domain is cleaved by ADAM10 and is secreted (BRI2C, soluble form). The membrane-bound N-terminal fragment (BRI2C, membrane form) is further proteolytically processed by SPPL2A and SPPL2B through regulated intramembrane proteolysis producing a secreted C-peptide and a BRI2 intracellular domain (BRI2 ICD) released in the cytosol. Shedding by ADAM10 facilitates intramembrane cleavage but is not absolutely required for BRI2 ICD generation. Glycosylation at Asn-170 is important for cell surface localization, but doesn't affect furin- and ADAM10-induced proteolytic processing.

It localises to the golgi apparatus membrane. Its subcellular location is the cell membrane. The protein resides in the endosome membrane. It is found in the secreted. Its function is as follows. Plays a regulatory role in the processing of the amyloid-beta A4 precursor protein (APP) and acts as an inhibitor of the amyloid-beta peptide aggregation and fibrils deposition. Plays a role in the induction of neurite outgrowth. Functions as a protease inhibitor by blocking access of secretases to APP cleavage sites. Functionally, mature BRI2 (mBRI2) functions as a modulator of the amyloid-beta A4 precursor protein (APP) processing leading to a strong reduction in the secretion of secretase-processed amyloid-beta protein 40 and amyloid-beta protein 42. Bri23 peptide prevents aggregation of APP amyloid-beta protein 42 into toxic oligomers. The polypeptide is Integral membrane protein 2B (ITM2B) (Sus scrofa (Pig)).